Consider the following 157-residue polypeptide: Large ribosomal subunit protein uL11 (157 aa).

This sequence belongs to the universal ribosomal protein uL11 family.

This protein binds directly to 26S ribosomal RNA. The chain is Large ribosomal subunit protein uL11 (RPL12) from Chlamydomonas reinhardtii (Chlamydomonas smithii).